A 1069-amino-acid chain; its full sequence is MDDKASVGKISVSSDSVSTLNSEDFVLVSRQGDETPSTNNGSDDEKTGLKIVGNGSEQQLQKELADVLMDPPMDDQPGEKELVKRSQLDGEGDGPLSNQLSASSTINPVPLVGLQKPEMSLPVKPGQGDSEASSPFTPVADEDSVVFSKLTYLGCASVNAPRSEVEALRMMSILRSQCQISLDVTLSVPNVSEGIVRLLDPQTNTEIANYPIYKILFCVRGHDGTPESDCFAFTESHYNAELFRIHVFRCEIQEAVSRILYSFATAFRRSAKQTPLSATAAPQTPDSDIFTFSVSLEIKEDDGKGYFSAVPKDKDRQCFKLRQGIDKKIVIYVQQTTNKELAIERCFGLLLSPGKDVRNSDMHLLDLESMGKSSDGKSYVITGSWNPKSPHFQVVNEETPKDKVLFMTTAVDLVITEVQEPVRFLLETKVRVCSPNERLFWPFSKRSTTENFFLKLKQIKQRERKNNTDTLYEVVCLESESERERRKTTASPSVRLPQSGSQSSVIPSPPEDDEEEDNDEPLLSGSGDVSKECAEKILETWGELLSKWHLNLNVRPKQLSSLVRNGVPEALRGEVWQLLAGCHNNDHLVEKYRILITKESPQDSAITRDINRTFPAHDYFKDTGGDGQDSLYKICKAYSVYDEEIGYCQGQSFLAAVLLLHMPEEQAFSVLVKIMFDYGLRELFKQNFEDLHCKFYQLERLMQEYIPDLYNHFLDISLEAHMYASQWFLTLFTAKFPLYMVFHIIDLLLCEGISVIFNVALGLLKTSKDDLLLTDFEGALKFFRVQLPKRYRSEENAKKLMELACNMKISQKKLKKYEKEYHTMREQQAQQEDPIERFERENRRLQEANMRLEQENDDLAHELVTSKIALRKDLDNAEEKADALNKELLMTKQKLIDAEEEKRRLEEESAQLKEMCRRELDKAESEIKKNSSIIGDYKQICSQLSERLEKQQTANKVEIEKIRQKVDDCERCREFFNKEGRVKGISSTKEVLDEDTDEEKETLKNQLREMELELAQTKLQLVEAECKIQDLEHHLGLALNEVQAAKKTWFNRTLSSIKTATGVQGKETC.

The interval 1-79 (MDDKASVGKI…DPPMDDQPGE (79 aa)) is disordered. Low complexity predominate over residues 7-22 (VGKISVSSDSVSTLNS). S42 carries the post-translational modification Phosphoserine. The region spanning 142–298 (EDSVVFSKLT…IFTFSVSLEI (157 aa)) is the PID domain. A Phosphoserine modification is found at S360. Positions 482-527 (ERERRKTTASPSVRLPQSGSQSSVIPSPPEDDEEEDNDEPLLSGSG) are disordered. Over residues 489 to 506 (TASPSVRLPQSGSQSSVI) the composition is skewed to polar residues. A compositionally biased stretch (acidic residues) spans 510–520 (PEDDEEEDNDE). The region spanning 566–752 (GVPEALRGEV…HIIDLLLCEG (187 aa)) is the Rab-GAP TBC domain. Positions 798–1047 (KKLMELACNM…ALNEVQAAKK (250 aa)) form a coiled coil. T996 is modified (phosphothreonine).

Interacts with RAB6A and tubulin gamma.

The protein resides in the cytoplasm. It is found in the cytosol. Its subcellular location is the cytoskeleton. It localises to the microtubule organizing center. The protein localises to the centrosome. Its function is as follows. May act as a GTPase-activating protein of RAB6A. May play a role in microtubule nucleation by centrosome. May participate in a RAB6A-mediated pathway involved in the metaphase-anaphase transition. The polypeptide is Rab GTPase-activating protein 1 (RABGAP1) (Homo sapiens (Human)).